The primary structure comprises 1820 residues: Sodium channel protein (1820 aa).

Residues 1–117 lie on the Cytoplasmic side of the membrane; sequence MARKFSSARP…FNPIRRGAIR (117 aa). One copy of the I repeat lies at 108–410; it reads FNPIRRGAIR…VAMAYEEQNQ (303 aa). A helical transmembrane segment spans residues 118–138; the sequence is VFVNSAFNFFIMFTIFSNCIF. Topologically, residues 139-149 are extracellular; sequence MTISNPPAWSK. The helical transmembrane segment at 150–171 threads the bilayer; that stretch reads IVEYTFTGIYTFEVIVKVLSRG. The Cytoplasmic portion of the chain corresponds to 172–176; it reads FCIGH. A helical transmembrane segment spans residues 177-197; it reads FTFLRDPWNWLDFSVVTMTYI. Topologically, residues 198–203 are extracellular; it reads TEFIDL. Residues 204 to 224 traverse the membrane as a helical; Voltage-sensor segment; the sequence is RNVSALRTFRVLRALKTITIF. Residues 225–243 lie on the Cytoplasmic side of the membrane; that stretch reads PGLKTIVRALIESMKQMGD. Residues 244 to 264 traverse the membrane as a helical segment; that stretch reads VVILTVFSLAVFTLAGMQLFM. Topologically, residues 265 to 346 are extracellular; the sequence is GNLRHKCIRW…PNYGYTNYDN (82 aa). An intrachain disulfide couples cysteine 271 to cysteine 324. Residues asparagine 278, asparagine 288, and asparagine 317 are each glycosylated (N-linked (GlcNAc...) asparagine). A non-homologous region of repeat I region spans residues 285–342; that stretch reads SAYNTTFDFTAYIENEENQYFLDGALDALLCGNNSDAGKCPEGYTCMKAGRNPNYGYT. The pore-forming intramembrane region spans 347 to 371; it reads FAWTFLCLFRLMLQDYWENLYQMTL. Residues 372–378 lie on the Extracellular side of the membrane; that stretch reads RAAGKSY. The chain crosses the membrane as a helical span at residues 379–402; the sequence is MVFFIMVIFLGSFYLINLILAVVA. Topologically, residues 403–557 are cytoplasmic; that stretch reads MAYEEQNQAT…CCGPWVFLKK (155 aa). The interval 483-507 is disordered; sequence SVKLSTEEQRSDSKSMDSKHSVDKP. The segment covering 487–507 has biased composition (basic and acidic residues); the sequence is STEEQRSDSKSMDSKHSVDKP. An II repeat occupies 548–811; sequence CCGPWVFLKK…EEDDEVNSLQ (264 aa). The chain crosses the membrane as a helical span at residues 558–578; sequence WVHFVMMDPFTDLFITLCIIL. Topologically, residues 579–599 are extracellular; sequence NTLFMSIEHHPMNESFQSLLS. Asparagine 591 is a glycosylation site (N-linked (GlcNAc...) asparagine). The helical transmembrane segment at 600–620 threads the bilayer; it reads AGNLVFTTIFAAEMVLKIIAL. The Cytoplasmic segment spans residues 621-625; the sequence is DPYYY. The chain crosses the membrane as a helical span at residues 626-643; that stretch reads FQQTWNIFDSIIVSLSLL. The Extracellular segment spans residues 644–650; it reads ELGLSNM. A helical; Voltage-sensor transmembrane segment spans residues 651–671; sequence QGMSVLRSLRLLRIFKLAKSW. Over 672-690 the chain is Cytoplasmic; it reads PTLNILIKIICNSVGALGN. Residues 691–711 traverse the membrane as a helical segment; sequence LTIVLAIIVFIFALVGFQLFG. Over 712–734 the chain is Extracellular; that stretch reads KNYKEYVCKISDDCELPRWHMND. An intramembrane region (pore-forming) is located at residues 735 to 755; the sequence is FFHSFLIVFRALCGEWIETMW. The Extracellular portion of the chain corresponds to 756 to 766; the sequence is DCMEVGGVPMC. Cysteine 757 and cysteine 766 are disulfide-bonded. A helical membrane pass occupies residues 767–790; the sequence is LAVYMMVIIIGNLVMLNLFLALLL. The Cytoplasmic segment spans residues 791 to 1004; the sequence is SSFSSDNLSS…TIVEHDYFET (214 aa). Disordered regions lie at residues 844–864 and 891–959; these read PPSD…DTLP and VKGE…SKDP. The segment covering 896 to 910 has biased composition (acidic residues); sequence EIEEEGLVDSSDEED. Residues 924 to 935 are compositionally biased toward polar residues; it reads SVCSTVDYSPSE. Residues 942–953 show a composition bias toward acidic residues; it reads EEEEEEEEEPEE. The stretch at 988 to 1295 is one III repeat; the sequence is NLRRTCYTIV…KKYYNAMKKL (308 aa). The helical transmembrane segment at 1005 to 1025 threads the bilayer; sequence FIIFMILLSSGVLAFEDIYIW. The Extracellular portion of the chain corresponds to 1026 to 1037; that stretch reads RRRVIKVILEYA. Residues 1038 to 1058 traverse the membrane as a helical segment; the sequence is DKVFTYVFIVEMLLKWVAYGF. Residues 1059–1065 are Cytoplasmic-facing; it reads KRYFTDA. A helical transmembrane segment spans residues 1066 to 1086; sequence WCWLDFVIVGASIMGITSSLL. Residues 1087-1091 lie on the Extracellular side of the membrane; the sequence is GYEEL. Residues 1092 to 1112 traverse the membrane as a helical; Voltage-sensor segment; the sequence is GAIKNLRTIRALRPLRALSRF. At 1113 to 1131 the chain is on the cytoplasmic side; the sequence is EGMKVVVRALLGAIPSIMN. Residues 1132–1152 form a helical membrane-spanning segment; that stretch reads VLLVCLMFWLIFSIMGVNLFA. The Extracellular portion of the chain corresponds to 1153 to 1199; sequence GKFYRCINTTTDEILPVEEVNNRSDCMALMYTNEVRWVNLKVNYDNA. 2 N-linked (GlcNAc...) asparagine glycosylation sites follow: asparagine 1160 and asparagine 1174. Residues 1172-1194 are non-homologous region of repeat III; it reads VNNRSDCMALMYTNEVRWVNLKV. An intramembrane region (pore-forming) is located at residues 1200–1221; sequence GMGYLSLLQVSTFKGWMDIMYA. Topologically, residues 1222 to 1243 are extracellular; sequence AVDSREVEDQPIYEINVYMYLY. The chain crosses the membrane as a helical span at residues 1244–1264; that stretch reads FVIFIVFGAFFTLNLFIGVII. The Cytoplasmic portion of the chain corresponds to 1265 to 1320; sequence DNFNRQKQKLGGEDLFMTEEQKKYYNAMKKLGSKKAAKCIPRPSNVVQGVVYDIVT. Residues 1304 to 1602 form an IV repeat; sequence IPRPSNVVQG…WHKFDVHGTQ (299 aa). A helical membrane pass occupies residues 1321–1341; it reads QPFTDIFIMALICINMVAMMV. Topologically, residues 1342–1352 are extracellular; it reads ESEDQSQVKKD. A helical membrane pass occupies residues 1353 to 1376; it reads ILSQINVIFVIIFTVECLLKLLAL. At 1377 to 1380 the chain is on the cytoplasmic side; sequence RQYF. The helical transmembrane segment at 1381-1398 threads the bilayer; the sequence is FTVGWNVFDFAVVVISII. Topologically, residues 1399–1416 are extracellular; that stretch reads GLLLSDIIEKYFVSPTLF. Residues 1417-1437 traverse the membrane as a helical; Voltage-sensor segment; that stretch reads RVIRLARIARVLRLIRAAKGI. Residues 1438-1453 lie on the Cytoplasmic side of the membrane; that stretch reads RTLLFALMMSLPALFN. Residues 1454 to 1474 form a helical membrane-spanning segment; it reads IGLLLFLIMFIFSIFGMSNFA. At 1475 to 1490 the chain is on the extracellular side; that stretch reads YVKKQGGVDDIFNFET. A non-homologous region of repeat IV region spans residues 1490-1505; the sequence is TFGNSMICLFEITTSA. Residues 1491–1513 constitute an intramembrane region (pore-forming); that stretch reads FGNSMICLFEITTSAGWDGLLLP. Residues 1514–1543 lie on the Extracellular side of the membrane; it reads TLNTGPPDCDPDVENPGTDVRGNCGNPGKG. Residues 1544 to 1567 traverse the membrane as a helical segment; sequence ITFFCSYIILSFLVVVNMYIAIIL. The Cytoplasmic portion of the chain corresponds to 1568–1820; it reads ENFGVAQEES…GAIVVRESIV (253 aa).

The protein belongs to the sodium channel (TC 1.A.1.10) family.

The protein resides in the cell membrane. Mediates the voltage-dependent sodium ion permeability of excitable membranes. Assuming opened or closed conformations in response to the voltage difference across the membrane, the protein forms a sodium-selective channel through which Na(+) ions may pass in accordance with their electrochemical gradient. This chain is Sodium channel protein, found in Electrophorus electricus (Electric eel).